A 275-amino-acid polypeptide reads, in one-letter code: NH(3)-dependent NAD(+) synthetase (275 aa).

46-53 (GISGGQDS) contacts ATP. D52 is a Mg(2+) binding site. R140 contributes to the deamido-NAD(+) binding site. Residue T160 coordinates ATP. A Mg(2+)-binding site is contributed by E165. Positions 173 and 180 each coordinate deamido-NAD(+). K189 and T211 together coordinate ATP. 260–261 (HK) provides a ligand contact to deamido-NAD(+).

This sequence belongs to the NAD synthetase family. In terms of assembly, homodimer.

The catalysed reaction is deamido-NAD(+) + NH4(+) + ATP = AMP + diphosphate + NAD(+) + H(+). It functions in the pathway cofactor biosynthesis; NAD(+) biosynthesis; NAD(+) from deamido-NAD(+) (ammonia route): step 1/1. Its function is as follows. Catalyzes the ATP-dependent amidation of deamido-NAD to form NAD. Uses ammonia as a nitrogen source. The sequence is that of NH(3)-dependent NAD(+) synthetase from Shigella boydii serotype 4 (strain Sb227).